The primary structure comprises 60 residues: UPF0509 protein ESA_01586 (60 aa).

This sequence belongs to the UPF0509 family.

The polypeptide is UPF0509 protein ESA_01586 (Cronobacter sakazakii (strain ATCC BAA-894) (Enterobacter sakazakii)).